The chain runs to 314 residues: DNA-directed RNA polymerase subunit alpha (314 aa).

Residues 1–228 (MIEIEKPKIE…EHLNIFVGLT (228 aa)) form an alpha N-terminal domain (alpha-NTD) region. Residues 246–314 (EKVLEMTIEE…ELGLGLRKDD (69 aa)) form an alpha C-terminal domain (alpha-CTD) region.

Belongs to the RNA polymerase alpha chain family. In terms of assembly, homodimer. The RNAP catalytic core consists of 2 alpha, 1 beta, 1 beta' and 1 omega subunit. When a sigma factor is associated with the core the holoenzyme is formed, which can initiate transcription.

It carries out the reaction RNA(n) + a ribonucleoside 5'-triphosphate = RNA(n+1) + diphosphate. DNA-dependent RNA polymerase catalyzes the transcription of DNA into RNA using the four ribonucleoside triphosphates as substrates. This Bacillus pumilus (strain SAFR-032) protein is DNA-directed RNA polymerase subunit alpha.